Here is a 154-residue protein sequence, read N- to C-terminus: N-acetylneuraminate anomerase NanQ (154 aa).

Belongs to the NanQ anomerase family. It depends on Zn(2+) as a cofactor.

The protein localises to the cytoplasm. It catalyses the reaction N-acetyl-alpha-neuraminate = aceneuramate. The catalysed reaction is N-acetyl-beta-neuraminate = aceneuramate. Its activity is regulated as follows. Inhibited by 1,10-phenanthroline. In terms of biological role, opens both the alpha- and beta-forms of N-acetylneuraminate (sialic acid; Neu5Ac) to provide aceneuramate, the preferred substrate for NanA. Has preferential activity on the beta-anomer rather than the alpha-anomer. Accelerates a reaction that is spontaneous at slightly alkaline pH, facilitates the reaction at acidic pH. The chain is N-acetylneuraminate anomerase NanQ from Escherichia coli (strain K12).